A 216-amino-acid polypeptide reads, in one-letter code: Gamma-glutamylcyclotransferase 2-1 (216 aa).

Residue 5–10 (VFGYGS) participates in substrate binding. Glu87 acts as the Proton acceptor in catalysis.

The protein belongs to the gamma-glutamylcyclotransferase family. It depends on Mn(2+) as a cofactor. Expressed in the central vascular bundle of roots, leaf veins, hydathodes, cauline leaves, shoot apex, sepal veins, flower receptacles and developing seeds.

It localises to the cytoplasm. It catalyses the reaction an alpha-(gamma-L-glutamyl)-L-amino acid = 5-oxo-L-proline + an L-alpha-amino acid. Its function is as follows. Catalyzes the formation of 5-oxoproline from gamma-glutamyl dipeptides and plays a significant role in glutathione (GSH) homeostasis. Converts both GSH and gamma-glutamyl-L-alanine to 5-oxoproline in vitro. Plays a role in detoxification of heavy metals and metalloids by recycling glutamate and maintaining GSH homeostasis. The chain is Gamma-glutamylcyclotransferase 2-1 from Arabidopsis thaliana (Mouse-ear cress).